The following is a 137-amino-acid chain: uncharacterized protein (137 aa).

To E.coli YfdK.

This is an uncharacterized protein from Escherichia coli (strain K12).